Consider the following 456-residue polypeptide: Phosphomethylpyrimidine synthase (456 aa).

Residues asparagine 80, methionine 109, tyrosine 139, histidine 175, 195–197, 236–239, and glutamate 275 contribute to the substrate site; these read SRG and DSLR. Histidine 279 contributes to the Zn(2+) binding site. A substrate-binding site is contributed by tyrosine 302. Histidine 343 contacts Zn(2+). [4Fe-4S] cluster contacts are provided by cysteine 423, cysteine 426, and cysteine 431.

Belongs to the ThiC family. Requires [4Fe-4S] cluster as cofactor.

It catalyses the reaction 5-amino-1-(5-phospho-beta-D-ribosyl)imidazole + S-adenosyl-L-methionine = 4-amino-2-methyl-5-(phosphooxymethyl)pyrimidine + CO + 5'-deoxyadenosine + formate + L-methionine + 3 H(+). The protein operates within cofactor biosynthesis; thiamine diphosphate biosynthesis. Functionally, catalyzes the synthesis of the hydroxymethylpyrimidine phosphate (HMP-P) moiety of thiamine from aminoimidazole ribotide (AIR) in a radical S-adenosyl-L-methionine (SAM)-dependent reaction. This is Phosphomethylpyrimidine synthase from Prochlorococcus marinus (strain MIT 9515).